Consider the following 125-residue polypeptide: Lectin (125 aa).

A C-type lectin domain is found at 1 to 120; sequence MDYEILFSDE…CGGARRVICE (120 aa). 2 disulfide bridges follow: Cys-21/Cys-119 and Cys-96/Cys-111.

In terms of assembly, homodimer.

Functionally, role in the defense system of the organism against microorganisms. This calcium-binding lectin binds galactose. The polypeptide is Lectin (Polyandrocarpa misakiensis (Tunicate)).